The primary structure comprises 354 residues: Dye-decolorizing peroxidase (354 aa).

The active-site Proton acceptor is Asp165. His238 contacts heme. The targeting peptide stretch occupies residues Gly312–Ala335. Residues Asp324–Pro337 are compositionally biased toward pro residues. The tract at residues Asp324–Arg354 is disordered. The segment covering Gly342–Arg354 has biased composition (polar residues).

This sequence belongs to the DyP-type peroxidase family. In terms of assembly, found in a complex with type 1 encapsulin, strongly suggesting it is found in a type 1 encapsulin nanocompartment. Homotetramer, presumably also in the type 1 encapsulin nanocompartment. The cofactor is heme b.

The protein localises to the encapsulin nanocompartment. It is found in the cell membrane. It carries out the reaction 2 a phenolic donor + H2O2 = 2 a phenolic radical donor + 2 H2O. Its function is as follows. Cargo protein of a type 1 encapsulin nanocompartment. A heme-dependent peroxidase. This cargo-loaded encapsulin nanocompartment is probably involved in protection against oxidative damage. The polypeptide is Dye-decolorizing peroxidase (Mycolicibacterium paratuberculosis (strain ATCC BAA-968 / K-10) (Mycobacterium paratuberculosis)).